A 401-amino-acid chain; its full sequence is Imidazolonepropionase (401 aa).

Residues His66 and His68 each contribute to the Fe(3+) site. His66 and His68 together coordinate Zn(2+). 4-imidazolone-5-propanoate contacts are provided by Arg75, Tyr138, and His171. Residue Tyr138 coordinates N-formimidoyl-L-glutamate. His236 contacts Fe(3+). Zn(2+) is bound at residue His236. A 4-imidazolone-5-propanoate-binding site is contributed by Gln239. Asp311 serves as a coordination point for Fe(3+). Residue Asp311 coordinates Zn(2+). Residues Asn313 and Gly315 each contribute to the N-formimidoyl-L-glutamate site. Thr316 contacts 4-imidazolone-5-propanoate.

It belongs to the metallo-dependent hydrolases superfamily. HutI family. Requires Zn(2+) as cofactor. Fe(3+) serves as cofactor.

It localises to the cytoplasm. The enzyme catalyses 4-imidazolone-5-propanoate + H2O = N-formimidoyl-L-glutamate. Its pathway is amino-acid degradation; L-histidine degradation into L-glutamate; N-formimidoyl-L-glutamate from L-histidine: step 3/3. Functionally, catalyzes the hydrolytic cleavage of the carbon-nitrogen bond in imidazolone-5-propanoate to yield N-formimidoyl-L-glutamate. It is the third step in the universal histidine degradation pathway. The chain is Imidazolonepropionase from Pseudomonas putida (strain ATCC 700007 / DSM 6899 / JCM 31910 / BCRC 17059 / LMG 24140 / F1).